We begin with the raw amino-acid sequence, 290 residues long: GTPase Era (290 aa).

The Era-type G domain maps to 2-169 (KSGFVSIIGR…KDKIYENLQE (168 aa)). A G1 region spans residues 10–17 (GRPSTGKS). Position 10–17 (10–17 (GRPSTGKS)) interacts with GTP. The tract at residues 36–40 (QTTRN) is G2. The segment at 57 to 60 (DTPG) is G3. GTP is bound by residues 57–61 (DTPGF) and 119–122 (NKID). The G4 stretch occupies residues 119 to 122 (NKID). Residues 148 to 150 (ISA) form a G5 region. The KH type-2 domain occupies 200–276 (LKEELPYSLY…DLFLQVKLRK (77 aa)).

This sequence belongs to the TRAFAC class TrmE-Era-EngA-EngB-Septin-like GTPase superfamily. Era GTPase family. As to quaternary structure, monomer.

It localises to the cytoplasm. Its subcellular location is the cell inner membrane. An essential GTPase that binds both GDP and GTP, with rapid nucleotide exchange. Plays a role in 16S rRNA processing and 30S ribosomal subunit biogenesis and possibly also in cell cycle regulation and energy metabolism. The protein is GTPase Era of Borrelia turicatae (strain 91E135).